The sequence spans 369 residues: Flagellar P-ring protein 1 (369 aa).

Positions 1-23 (MRKQSLVTLLMVLLSLVWLPASA) are cleaved as a signal peptide.

The protein belongs to the FlgI family. In terms of assembly, the basal body constitutes a major portion of the flagellar organelle and consists of four rings (L,P,S, and M) mounted on a central rod.

Its subcellular location is the periplasm. The protein localises to the bacterial flagellum basal body. In terms of biological role, assembles around the rod to form the L-ring and probably protects the motor/basal body from shearing forces during rotation. This chain is Flagellar P-ring protein 1, found in Yersinia pseudotuberculosis serotype I (strain IP32953).